Consider the following 473-residue polypeptide: Glutamate--tRNA ligase 1 (473 aa).

The 'HIGH' region signature appears at Pro10–Gly20. Positions Lys252–Arg256 match the 'KMSKS' region motif. Lys255 contacts ATP.

This sequence belongs to the class-I aminoacyl-tRNA synthetase family. Glutamate--tRNA ligase type 1 subfamily. As to quaternary structure, monomer.

It is found in the cytoplasm. It carries out the reaction tRNA(Glu) + L-glutamate + ATP = L-glutamyl-tRNA(Glu) + AMP + diphosphate. Catalyzes the attachment of glutamate to tRNA(Glu) in a two-step reaction: glutamate is first activated by ATP to form Glu-AMP and then transferred to the acceptor end of tRNA(Glu). This chain is Glutamate--tRNA ligase 1, found in Wolbachia pipientis wMel.